Here is a 478-residue protein sequence, read N- to C-terminus: E3 ubiquitin-protein ligase makorin-1 (478 aa).

C3H1-type zinc fingers lie at residues tryptophan 51–serine 78, serine 80–proline 107, and glutamate 204–alanine 231. The interval cysteine 232–histidine 259 is makorin-type Cys-His. The RING-type zinc-finger motif lies at cysteine 277–arginine 331. The C3H1-type 4 zinc-finger motif lies at alanine 360 to proline 389.

Interacts with p53/TP53 and CDKN1A. Interacts with TERT, modulating telomere length homeostasis. Post-translationally, auto-ubiquitinated; which leads to proteasomal degradation.

The enzyme catalyses S-ubiquitinyl-[E2 ubiquitin-conjugating enzyme]-L-cysteine + [acceptor protein]-L-lysine = [E2 ubiquitin-conjugating enzyme]-L-cysteine + N(6)-ubiquitinyl-[acceptor protein]-L-lysine.. It functions in the pathway protein modification; protein ubiquitination. In terms of biological role, E3 ubiquitin ligase catalyzing the covalent attachment of ubiquitin moieties onto substrate proteins. These substrates include FILIP1, p53/TP53, CDKN1A and TERT. Keeps cells alive by suppressing p53/TP53 under normal conditions, but stimulates apoptosis by repressing CDKN1A under stress conditions. Acts as a negative regulator of telomerase. Has negative and positive effects on RNA polymerase II-dependent transcription. This Notamacropus eugenii (Tammar wallaby) protein is E3 ubiquitin-protein ligase makorin-1 (MKRN1).